The primary structure comprises 467 residues: Chromosomal replication initiator protein DnaA (467 aa).

The tract at residues 1-90 (MSLSLWQQCL…KPVTQTPQAA (90 aa)) is domain I, interacts with DnaA modulators. The interval 91–130 (VTSNVAAPAQVAQTQPQRAAPSTRSGWDNVPAPAEPTYRS) is domain II. Low complexity predominate over residues 98 to 111 (PAQVAQTQPQRAAP). Residues 98–119 (PAQVAQTQPQRAAPSTRSGWDN) are disordered. The domain III, AAA+ region stretch occupies residues 131 to 347 (NVNVKHTFDN…GALNRVIANA (217 aa)). The ATP site is built by Gly-175, Gly-177, Lys-178, and Thr-179. The segment at 348–467 (NFTGRAITID…FSNLIRTLSS (120 aa)) is domain IV, binds dsDNA.

This sequence belongs to the DnaA family. Oligomerizes as a right-handed, spiral filament on DNA at oriC.

The protein resides in the cytoplasm. Its function is as follows. Plays an essential role in the initiation and regulation of chromosomal replication. ATP-DnaA binds to the origin of replication (oriC) to initiate formation of the DNA replication initiation complex once per cell cycle. Binds the DnaA box (a 9 base pair repeat at the origin) and separates the double-stranded (ds)DNA. Forms a right-handed helical filament on oriC DNA; dsDNA binds to the exterior of the filament while single-stranded (ss)DNA is stabiized in the filament's interior. The ATP-DnaA-oriC complex binds and stabilizes one strand of the AT-rich DNA unwinding element (DUE), permitting loading of DNA polymerase. After initiation quickly degrades to an ADP-DnaA complex that is not apt for DNA replication. Binds acidic phospholipids. In Shigella sonnei (strain Ss046), this protein is Chromosomal replication initiator protein DnaA.